We begin with the raw amino-acid sequence, 347 residues long: sn-1 oleoyl-lipid 12-desaturase (347 aa).

The next 2 membrane-spanning stretches (helical) occupy residues 41 to 63 (AWSRVLLSVAAVVGCYALLAIAP) and 67 to 85 (LLPVWFLTGTTLTGFFVIG). Residues 86-90 (HDCGH) carry the Histidine box-1 motif. Residues 98 to 118 (WVNNLVGHLAFLPLIYPFHSW) form a helical membrane-spanning segment. A Histidine box-2 motif is present at residues 122-126 (HNHHH). 3 helical membrane-spanning segments follow: residues 164 to 184 (LWWLASVIHQLKLHFNWFAFE), 196 to 216 (LFVIIAGAIAFPVMFYTLGVW), and 218 to 238 (VVKFWLMPWLGYHFWMSTFTL). A Histidine box-3 motif is present at residues 286–290 (HHLST).

It belongs to the fatty acid desaturase type 2 family. Fe(2+) is required as a cofactor.

It is found in the membrane. The catalysed reaction is a 1-[(9Z)-octadecenoyl]-2-acyl-glycerolipid + 2 reduced [2Fe-2S]-[ferredoxin] + O2 + 2 H(+) = a 1-[(9Z,12Z)-octadecdienoyl]-2-acyl-glycerolipid + 2 oxidized [2Fe-2S]-[ferredoxin] + 2 H2O. Its pathway is lipid metabolism; polyunsaturated fatty acid biosynthesis. Desaturase involved in fatty acid biosynthesis. Introduces a double bond at carbon 12 of oleoyl groups (18:1) attached to the sn-1 position of the glycerol moiety of membrane glycerolipids. Can also efficiently catalyze the desaturation of palmitoleic acid (16:1) in vitro. The polypeptide is sn-1 oleoyl-lipid 12-desaturase (Picosynechococcus sp. (strain ATCC 27264 / PCC 7002 / PR-6) (Agmenellum quadruplicatum)).